Reading from the N-terminus, the 673-residue chain is MNGFFKNLSLWLVIGLLMVMLFNLFNSPQGPGQSITFSDFSEMVAQGKVTAVTLEGRTVRGLSTDGSPFSSRVPDNYDLTKDLLAHGVDIDVREPEGTPMLMQILISWFPMLLLIAVWIYFMRQMQSGGGRGAMSFGKSKAKLMSDKAAKVTFQDVAGIEEAKEELQEVVQFLKDPHKFQRLGGKIPKGVLLVGPPGTGKTLLARAIAGEANVPFFNLSGSDFVEMFVGVGAARVRDMFEQGKKNAPCIIFIDEIDAVGRHRGAGLGGGHDEREQTLNQLLVEMDGFESTEGVIMVAATNRPDVLDPALLRPGRFDRQVTVPNPDILGRTQILKVHMNKVPLSDSVDAEVIARATPGFSGADLANLVNEAALIAAQLDKRVVEMEDFENAKDKVMMGKPRRSAVISEKERKTTAYHEAGHAVVAMALDGADPVHKVTIIPRGRALGLTMQLPLEDRYTYSKVQLEQNIAILMGGRLAEELVLNQLTTGAGNDIQRATDLARKMICSYGMSDTLGPLTYGENEQEIFLGREITQHKSVSEETARRIDAEVFDIVDRNYKRAKQILTDKMEVLHTMAQALLERETIDADEVIKLMAGEPAETALKPLKKKDERANKPTPTVADDGEQGDQTAKDAVAGSVTQAEDDVEGSTRTATEASTQEVVSKDTPEGDDKDR.

Residues 1-7 (MNGFFKN) lie on the Cytoplasmic side of the membrane. Residues 8–28 (LSLWLVIGLLMVMLFNLFNSP) traverse the membrane as a helical segment. Residues 29–100 (QGPGQSITFS…DVREPEGTPM (72 aa)) lie on the Periplasmic side of the membrane. A helical membrane pass occupies residues 101 to 121 (LMQILISWFPMLLLIAVWIYF). The Cytoplasmic portion of the chain corresponds to 122–673 (MRQMQSGGGR…DTPEGDDKDR (552 aa)). 194-201 (GPPGTGKT) serves as a coordination point for ATP. Residue H416 coordinates Zn(2+). E417 is an active-site residue. 2 residues coordinate Zn(2+): H420 and D492. The tract at residues 601-673 (ALKPLKKKDE…DTPEGDDKDR (73 aa)) is disordered. Residues 648–660 (STRTATEASTQEV) show a composition bias toward polar residues. Residues 661–673 (VSKDTPEGDDKDR) show a composition bias toward basic and acidic residues.

In the central section; belongs to the AAA ATPase family. The protein in the C-terminal section; belongs to the peptidase M41 family. As to quaternary structure, homohexamer. It depends on Zn(2+) as a cofactor.

It localises to the cell inner membrane. Functionally, acts as a processive, ATP-dependent zinc metallopeptidase for both cytoplasmic and membrane proteins. Plays a role in the quality control of integral membrane proteins. This Magnetococcus marinus (strain ATCC BAA-1437 / JCM 17883 / MC-1) protein is ATP-dependent zinc metalloprotease FtsH.